Here is a 326-residue protein sequence, read N- to C-terminus: Phospho-N-acetylmuramoyl-pentapeptide-transferase (326 aa).

10 helical membrane passes run Gly-5–Ile-25, Thr-51–Ala-71, Val-82–Ile-102, Ile-122–Tyr-142, Leu-148–Ser-168, Leu-180–Ile-200, Val-204–Ala-224, Val-229–Leu-249, Leu-252–Ile-272, and Val-304–Val-324.

Belongs to the glycosyltransferase 4 family. MraY subfamily. Mg(2+) is required as a cofactor.

It localises to the cell membrane. It catalyses the reaction UDP-N-acetyl-alpha-D-muramoyl-L-alanyl-gamma-D-glutamyl-meso-2,6-diaminopimeloyl-D-alanyl-D-alanine + di-trans,octa-cis-undecaprenyl phosphate = di-trans,octa-cis-undecaprenyl diphospho-N-acetyl-alpha-D-muramoyl-L-alanyl-D-glutamyl-meso-2,6-diaminopimeloyl-D-alanyl-D-alanine + UMP. It participates in cell wall biogenesis; peptidoglycan biosynthesis. Catalyzes the initial step of the lipid cycle reactions in the biosynthesis of the cell wall peptidoglycan: transfers peptidoglycan precursor phospho-MurNAc-pentapeptide from UDP-MurNAc-pentapeptide onto the lipid carrier undecaprenyl phosphate, yielding undecaprenyl-pyrophosphoryl-MurNAc-pentapeptide, known as lipid I. The sequence is that of Phospho-N-acetylmuramoyl-pentapeptide-transferase from Oceanobacillus iheyensis (strain DSM 14371 / CIP 107618 / JCM 11309 / KCTC 3954 / HTE831).